The primary structure comprises 466 residues: Coagulation factor VII (466 aa).

The N-terminal stretch at 1–20 is a signal peptide; the sequence is MVSQALRLLCLLLGLQGCLA. A propeptide spanning residues 21–60 is cleaved from the precursor; that stretch reads AGGVAKASGGETRDMPWKPGPHRVFVTQEEAHGVLHRRRR. In terms of domain architecture, Gla spans 61 to 105; sequence ANAFLEELRPGSLERECKEEQCSFEEAREIFKDAERTKLFWISYS. 4-carboxyglutamate is present on residues Glu-66, Glu-67, Glu-74, Glu-76, Glu-79, Glu-80, Glu-85, Glu-86, Glu-89, and Glu-95. Cys-77 and Cys-82 are joined by a disulfide. The 37-residue stretch at 106-142 folds into the EGF-like 1; calcium-binding domain; the sequence is DGDQCASSPCQNGGSCKDQLQSYICFCLPAFEGRNCE. Cystine bridges form between Cys-110/Cys-121, Cys-115/Cys-130, Cys-132/Cys-141, Cys-151/Cys-162, Cys-158/Cys-172, Cys-174/Cys-187, Cys-195/Cys-322, Cys-219/Cys-224, Cys-238/Cys-254, and Cys-370/Cys-389. Ser-112 carries an O-linked (Glc...) serine; alternate glycan. Ser-112 is a glycosylation site (O-linked (Xyl...) serine; alternate). Ser-120 carries O-linked (Fuc) serine glycosylation. At Asp-123 the chain carries (3R)-3-hydroxyaspartate. The EGF-like 2 domain maps to 147 to 188; that stretch reads DQLICVNENGGCEQYCSDHTGTKRSCRCHEGYSLLADGVSCT. An N-linked (GlcNAc...) asparagine glycan is attached at Asn-205. Positions 213–452 constitute a Peptidase S1 domain; it reads IVGGKVCPKG…YIEWLQKLMR (240 aa). Active-site charge relay system residues include His-253 and Asp-302. A glycan (N-linked (GlcNAc...) asparagine) is linked at Asn-382. Asp-398 contacts substrate. Cysteines 400 and 428 form a disulfide. Ser-404 functions as the Charge relay system in the catalytic mechanism.

The protein belongs to the peptidase S1 family. In terms of assembly, heterodimer of a light chain and a heavy chain linked by a disulfide bond. Interacts (activated) with iripin-8, a serine protease inhibitor from Ixodes ricinus saliva. Post-translationally, the vitamin K-dependent, enzymatic carboxylation of some glutamate residues allows the modified protein to bind calcium. In terms of processing, the iron and 2-oxoglutarate dependent 3-hydroxylation of aspartate and asparagine is (R) stereospecific within EGF domains. O- and N-glycosylated. N-glycosylation at Asn-205 occurs cotranslationally and is mediated by STT3A-containing complexes, while glycosylation at Asn-382 is post-translational and is mediated STT3B-containing complexes before folding. O-fucosylated by POFUT1 on a conserved serine or threonine residue found in the consensus sequence C2-X(4,5)-[S/T]-C3 of EGF domains, where C2 and C3 are the second and third conserved cysteines. Post-translationally, can be either O-glucosylated or O-xylosylated at Ser-112 by POGLUT1 in vitro. In terms of tissue distribution, plasma.

It is found in the secreted. It carries out the reaction Selective cleavage of Arg-|-Ile bond in factor X to form factor Xa.. Its function is as follows. Initiates the extrinsic pathway of blood coagulation. Serine protease that circulates in the blood in a zymogen form. Factor VII is converted to factor VIIa by factor Xa, factor XIIa, factor IXa, or thrombin by minor proteolysis. In the presence of tissue factor and calcium ions, factor VIIa then converts factor X to factor Xa by limited proteolysis. Factor VIIa also converts factor IX to factor IXa in the presence of tissue factor and calcium. This chain is Coagulation factor VII (F7), found in Homo sapiens (Human).